A 446-amino-acid chain; its full sequence is MKLFGTDGVRGRAGEKLNAMTAMRLAMAAGIYFRKNSITNKILVGKDTRKSGYMIETAIVAGLTAVGYNVIQIGPMPTPAIAFLTEDMRCDAGIMISASHNPFDDNGIKFFDSFGNKLSVEAEQAIENIFFHNEIIENNQKIGLEIGQSKRIDDVIGRYIVHIKNSFPKSLTLKGLRVVLDVANGAVYKVAPTVFSELGAETIVLNDEPNGGNINDGCGALHPENLAKEVKRLRADIGFAFDGDADRLVVVDENAKVVDGDALLGVLATYLDENKMLDKKEIVATVMSNAALDDYLAKHKIKLLRSNVGDKFVLEMMKENGINFGGEQSGHIIFSDFSKTGDGLVSALQVSACLLAKNKKASEIFGSIKAYPQKLSNLKIIEKRPLDELKGLKELEDELKKLGIRTLFRYSGTENVIRLLLEGKDEALVTKKIAEVEKFFIKALNE.

S99 serves as the catalytic Phosphoserine intermediate. 4 residues coordinate Mg(2+): S99, D242, D244, and D246. S99 carries the post-translational modification Phosphoserine.

This sequence belongs to the phosphohexose mutase family. Requires Mg(2+) as cofactor. In terms of processing, activated by phosphorylation.

The enzyme catalyses alpha-D-glucosamine 1-phosphate = D-glucosamine 6-phosphate. In terms of biological role, catalyzes the conversion of glucosamine-6-phosphate to glucosamine-1-phosphate. The polypeptide is Phosphoglucosamine mutase (Campylobacter fetus subsp. fetus (strain 82-40)).